We begin with the raw amino-acid sequence, 194 residues long: Acid tolerance regulatory protein ActR (194 aa).

A Response regulatory domain is found at 24 to 138 (SLLIVDDDTA…DILAALIQRP (115 aa)). 4-aspartylphosphate is present on aspartate 73.

Phosphorylated by ActS.

Functionally, member of the two-component regulatory system ActS/ActR acting in acid tolerance. These data implicate that a two-component sensor may be involved in pH sensing and/or response. This Sinorhizobium medicae (strain WSM419) (Ensifer medicae) protein is Acid tolerance regulatory protein ActR (actR).